Consider the following 408-residue polypeptide: DNA polymerase processivity factor (408 aa).

A Nuclear localization signal motif is present at residues 344–353 (KKRRNLLTKR).

This sequence belongs to the herpesviridae DNA polymerase processivity factor family. In terms of assembly, interacts with the DNA polymerase catalytic subunit. Interacts with the origin-binding protein.

The protein resides in the host nucleus. In terms of biological role, plays an essential role in viral DNA replication by acting as the polymerase accessory subunit. Associates with the viral polymerase to increase its processivity and forms high-affinity direct interactions with DNA. Facilitates the origin-binding protein loading onto DNA thus increasing its ability to assemble into a functional complex capable of unwinding duplex DNA. This is DNA polymerase processivity factor from Varicella-zoster virus (strain Oka vaccine) (HHV-3).